The chain runs to 405 residues: Bone morphogenetic protein 4 (405 aa).

A signal peptide spans 1-19 (MIPGNRMLMVILLCQVLLG). Residues 20–291 (GTNHASLIPE…GHALTRRARR (272 aa)) constitute a propeptide that is removed on maturation. Residues asparagine 144, asparagine 208, asparagine 347, and asparagine 362 are each glycosylated (N-linked (GlcNAc...) asparagine). Intrachain disulfides connect cysteine 305/cysteine 370, cysteine 334/cysteine 402, and cysteine 338/cysteine 404.

It belongs to the TGF-beta family. In terms of assembly, homodimer; disulfide-linked. Part of a complex consisting of TWSG1 and CHRD. Forms a ternary complex with chordin/CHRD and TSKU.

The protein resides in the secreted. Functionally, negatively regulates the structure and function of the limb apical ectodermal ridge. This is Bone morphogenetic protein 4 (BMP4) from Gallus gallus (Chicken).